We begin with the raw amino-acid sequence, 499 residues long: Glutamyl-tRNA(Gln) amidotransferase subunit B, chloroplastic/mitochondrial (499 aa).

This sequence belongs to the GatB/GatE family. GatB subfamily. In terms of assembly, subunit of the heterotrimeric GatCAB amidotransferase (AdT) complex, composed of A, B and C subunits.

It localises to the mitochondrion. The protein resides in the plastid. The protein localises to the chloroplast. It carries out the reaction L-glutamyl-tRNA(Gln) + L-glutamine + ATP + H2O = L-glutaminyl-tRNA(Gln) + L-glutamate + ADP + phosphate + H(+). Allows the formation of correctly charged Gln-tRNA(Gln) through the transamidation of misacylated Glu-tRNA(Gln) in chloroplasts and mitochondria. The reaction takes place in the presence of glutamine and ATP through an activated gamma-phospho-Glu-tRNA(Gln). In Ostreococcus lucimarinus (strain CCE9901), this protein is Glutamyl-tRNA(Gln) amidotransferase subunit B, chloroplastic/mitochondrial.